Consider the following 408-residue polypeptide: LL-diaminopimelate aminotransferase (408 aa).

The substrate site is built by Y15 and G42. Residues Y72, 108 to 109 (SK), Y132, N187, Y218, and 246 to 248 (SFS) each bind pyridoxal 5'-phosphate. Substrate is bound by residues K109, Y132, and N187. K249 is modified (N6-(pyridoxal phosphate)lysine). Pyridoxal 5'-phosphate is bound by residues R257 and N292. Substrate contacts are provided by N292 and R388.

This sequence belongs to the class-I pyridoxal-phosphate-dependent aminotransferase family. LL-diaminopimelate aminotransferase subfamily. In terms of assembly, homodimer. Pyridoxal 5'-phosphate serves as cofactor.

The catalysed reaction is (2S,6S)-2,6-diaminopimelate + 2-oxoglutarate = (S)-2,3,4,5-tetrahydrodipicolinate + L-glutamate + H2O + H(+). The protein operates within amino-acid biosynthesis; L-lysine biosynthesis via DAP pathway; LL-2,6-diaminopimelate from (S)-tetrahydrodipicolinate (aminotransferase route): step 1/1. Functionally, involved in the synthesis of meso-diaminopimelate (m-DAP or DL-DAP), required for both lysine and peptidoglycan biosynthesis. Catalyzes the direct conversion of tetrahydrodipicolinate to LL-diaminopimelate. The chain is LL-diaminopimelate aminotransferase from Prochlorococcus marinus (strain MIT 9312).